A 179-amino-acid chain; its full sequence is Large ribosomal subunit protein uL5 (179 aa).

The protein belongs to the universal ribosomal protein uL5 family. As to quaternary structure, part of the 50S ribosomal subunit; part of the 5S rRNA/L5/L18/L25 subcomplex. Contacts the 5S rRNA and the P site tRNA. Forms a bridge to the 30S subunit in the 70S ribosome.

In terms of biological role, this is one of the proteins that bind and probably mediate the attachment of the 5S RNA into the large ribosomal subunit, where it forms part of the central protuberance. In the 70S ribosome it contacts protein S13 of the 30S subunit (bridge B1b), connecting the 2 subunits; this bridge is implicated in subunit movement. Contacts the P site tRNA; the 5S rRNA and some of its associated proteins might help stabilize positioning of ribosome-bound tRNAs. The sequence is that of Large ribosomal subunit protein uL5 from Synechococcus sp. (strain CC9311).